The following is a 71-amino-acid chain: Small integral membrane protein 31 (71 aa).

The chain crosses the membrane as a helical span at residues 8–28 (LEVAFILLAFFIFSLFTLASI). Positions 48–57 (RKRKEFKGKK) are enriched in basic residues. Residues 48-71 (RKRKEFKGKKNCSDEEHKIETMQP) are disordered. A glycan (N-linked (GlcNAc...) asparagine) is linked at asparagine 58. A compositionally biased stretch (basic and acidic residues) spans 58–71 (NCSDEEHKIETMQP).

It is found in the membrane. The chain is Small integral membrane protein 31 from Mus musculus (Mouse).